A 253-amino-acid chain; its full sequence is Ubiquinone/menaquinone biosynthesis C-methyltransferase UbiE (253 aa).

S-adenosyl-L-methionine is bound by residues Thr76, Asp97, Asn125–Ala126, and Ser142.

It belongs to the class I-like SAM-binding methyltransferase superfamily. MenG/UbiE family.

It carries out the reaction a 2-demethylmenaquinol + S-adenosyl-L-methionine = a menaquinol + S-adenosyl-L-homocysteine + H(+). The catalysed reaction is a 2-methoxy-6-(all-trans-polyprenyl)benzene-1,4-diol + S-adenosyl-L-methionine = a 5-methoxy-2-methyl-3-(all-trans-polyprenyl)benzene-1,4-diol + S-adenosyl-L-homocysteine + H(+). It participates in quinol/quinone metabolism; menaquinone biosynthesis; menaquinol from 1,4-dihydroxy-2-naphthoate: step 2/2. The protein operates within cofactor biosynthesis; ubiquinone biosynthesis. Its function is as follows. Methyltransferase required for the conversion of demethylmenaquinol (DMKH2) to menaquinol (MKH2) and the conversion of 2-polyprenyl-6-methoxy-1,4-benzoquinol (DDMQH2) to 2-polyprenyl-3-methyl-6-methoxy-1,4-benzoquinol (DMQH2). This Xanthomonas oryzae pv. oryzae (strain MAFF 311018) protein is Ubiquinone/menaquinone biosynthesis C-methyltransferase UbiE.